A 375-amino-acid polypeptide reads, in one-letter code: Isopentenyl-diphosphate delta-isomerase (375 aa).

Position 8–9 (8–9 (RK)) interacts with substrate. FMN is bound by residues T65, 66–68 (GMT), S96, and N125. Position 96-98 (96-98 (SQR)) interacts with substrate. A substrate-binding site is contributed by Q160. E161 is a binding site for Mg(2+). Residues K192, T222, 273–275 (GVR), and 294–295 (AL) each bind FMN.

This sequence belongs to the IPP isomerase type 2 family. Homooctamer. Dimer of tetramers. It depends on FMN as a cofactor. The cofactor is NADPH. Mg(2+) serves as cofactor.

The protein localises to the cytoplasm. It catalyses the reaction isopentenyl diphosphate = dimethylallyl diphosphate. Functionally, involved in the biosynthesis of isoprenoids. Catalyzes the 1,3-allylic rearrangement of the homoallylic substrate isopentenyl (IPP) to its allylic isomer, dimethylallyl diphosphate (DMAPP). This Aeropyrum pernix (strain ATCC 700893 / DSM 11879 / JCM 9820 / NBRC 100138 / K1) protein is Isopentenyl-diphosphate delta-isomerase.